We begin with the raw amino-acid sequence, 183 residues long: Large ribosomal subunit protein uL22 (183 aa).

The disordered stretch occupies residues 163-183; it reads KTAAKKQSAKKLKKQKMMYRE. Basic residues predominate over residues 165 to 183; sequence AAKKQSAKKLKKQKMMYRE.

The protein belongs to the universal ribosomal protein uL22 family.

In Pectinaria gouldii (Trumpet worm), this protein is Large ribosomal subunit protein uL22 (rpl-17).